The following is a 2280-amino-acid chain: Protein Ycf2 (2280 aa).

Residue 1631–1638 (GSIGTGRS) participates in ATP binding.

This sequence belongs to the Ycf2 family.

It is found in the plastid. It localises to the chloroplast stroma. In terms of biological role, probable ATPase of unknown function. Its presence in a non-photosynthetic plant (Epifagus virginiana) and experiments in tobacco indicate that it has an essential function which is probably not related to photosynthesis. In Nicotiana tabacum (Common tobacco), this protein is Protein Ycf2 (ycf2-A).